A 438-amino-acid polypeptide reads, in one-letter code: 3-phosphoshikimate 1-carboxyvinyltransferase (438 aa).

The 3-phosphoshikimate site is built by K21, S22, and R26. Residue K21 coordinates phosphoenolpyruvate. 2 residues coordinate phosphoenolpyruvate: G93 and R121. 6 residues coordinate 3-phosphoshikimate: S166, S167, Q168, S194, D324, and K351. Q168 contributes to the phosphoenolpyruvate binding site. The active-site Proton acceptor is the D324. Phosphoenolpyruvate is bound by residues R355 and R395.

Belongs to the EPSP synthase family. In terms of assembly, monomer.

It is found in the cytoplasm. It catalyses the reaction 3-phosphoshikimate + phosphoenolpyruvate = 5-O-(1-carboxyvinyl)-3-phosphoshikimate + phosphate. It functions in the pathway metabolic intermediate biosynthesis; chorismate biosynthesis. Catalyzes the transfer of the enolpyruvyl moiety of phosphoenolpyruvate (PEP) to the 5-hydroxyl of shikimate-3-phosphate (S3P) to produce enolpyruvyl shikimate-3-phosphate and inorganic phosphate. The protein is 3-phosphoshikimate 1-carboxyvinyltransferase of Methanobrevibacter smithii (strain ATCC 35061 / DSM 861 / OCM 144 / PS).